The chain runs to 451 residues: tRNA modification GTPase MnmE (451 aa).

Positions 28, 85, and 124 each coordinate (6S)-5-formyl-5,6,7,8-tetrahydrofolate. One can recognise a TrmE-type G domain in the interval 220-373; sequence GLYTVLVGPP…LKTRLRTLLL (154 aa). A K(+)-binding site is contributed by asparagine 230. Residues 230–235, 249–255, and 274–277 each bind GTP; these read NVGKSS, TDVPGTT, and DTAG. A Mg(2+)-binding site is contributed by serine 234. Threonine 249, valine 251, and threonine 254 together coordinate K(+). Threonine 255 contacts Mg(2+). A (6S)-5-formyl-5,6,7,8-tetrahydrofolate-binding site is contributed by lysine 451.

Belongs to the TRAFAC class TrmE-Era-EngA-EngB-Septin-like GTPase superfamily. TrmE GTPase family. Homodimer. Heterotetramer of two MnmE and two MnmG subunits. K(+) is required as a cofactor.

Its subcellular location is the cytoplasm. Functionally, exhibits a very high intrinsic GTPase hydrolysis rate. Involved in the addition of a carboxymethylaminomethyl (cmnm) group at the wobble position (U34) of certain tRNAs, forming tRNA-cmnm(5)s(2)U34. The polypeptide is tRNA modification GTPase MnmE (Xylella fastidiosa (strain Temecula1 / ATCC 700964)).